The primary structure comprises 239 residues: MSQTQQALLQVQHVSKHYHDGEVTTQVLSGVDLTVYKGEQLAIVGSSGSGKSTLLHIMGTLDTPTSGTVLLDGEDLYQLSSARQAQIRNQDLGFIYQFHHLLPEFTAIENVAMPAFIQGRDKTQALVDAKNLLERVGLGHRLQHIPAQLSGGERQRVAIARALINKPKLVLADEPTGNLDASSGDNVYAMIRELAQQFGTAFVVVTHDHKLAAKMDRQLTMKDGILQVVAATSPTGLAE.

The ABC transporter domain occupies 9–239; the sequence is LQVQHVSKHY…AATSPTGLAE (231 aa). ATP is bound at residue 45-52; the sequence is GSSGSGKS.

Belongs to the ABC transporter superfamily. Lipoprotein translocase (TC 3.A.1.125) family. As to quaternary structure, the complex is composed of two ATP-binding proteins (LolD) and two transmembrane proteins (LolC and LolE).

It localises to the cell inner membrane. Functionally, part of the ABC transporter complex LolCDE involved in the translocation of mature outer membrane-directed lipoproteins, from the inner membrane to the periplasmic chaperone, LolA. Responsible for the formation of the LolA-lipoprotein complex in an ATP-dependent manner. This Shewanella frigidimarina (strain NCIMB 400) protein is Lipoprotein-releasing system ATP-binding protein LolD.